The following is a 76-amino-acid chain: Exodeoxyribonuclease 7 small subunit (76 aa).

This sequence belongs to the XseB family. As to quaternary structure, heterooligomer composed of large and small subunits.

It is found in the cytoplasm. The enzyme catalyses Exonucleolytic cleavage in either 5'- to 3'- or 3'- to 5'-direction to yield nucleoside 5'-phosphates.. Functionally, bidirectionally degrades single-stranded DNA into large acid-insoluble oligonucleotides, which are then degraded further into small acid-soluble oligonucleotides. The sequence is that of Exodeoxyribonuclease 7 small subunit from Geotalea uraniireducens (strain Rf4) (Geobacter uraniireducens).